We begin with the raw amino-acid sequence, 199 residues long: Tropomyosin-1 (199 aa).

A coiled-coil region spans residues 1–199 (MDKIREKLSN…DEIAASLENL (199 aa)). Residues Lys39 and Lys59 each participate in a glycyl lysine isopeptide (Lys-Gly) (interchain with G-Cter in ubiquitin) cross-link. 2 disordered regions span residues 59 to 81 (KLEA…ENQI) and 102 to 147 (LAES…TEKL). 2 stretches are compositionally biased toward basic and acidic residues: residues 68-80 (KQTE…KENQ) and 102-114 (LAES…DSHH). Polar residues predominate over residues 115–126 (LQSNNDNFSKKN). Over residues 136-147 (SDTKLKETTEKL) the composition is skewed to basic and acidic residues. Residue Lys187 forms a Glycyl lysine isopeptide (Lys-Gly) (interchain with G-Cter in ubiquitin) linkage. Ser195 carries the post-translational modification Phosphoserine.

In terms of assembly, homodimer.

It is found in the cytoplasm. The protein resides in the cytoskeleton. In Saccharomyces cerevisiae (strain ATCC 204508 / S288c) (Baker's yeast), this protein is Tropomyosin-1 (TPM1).